The chain runs to 147 residues: Hemoglobin subunit beta (147 aa).

Positions 2-147 constitute a Globin domain; the sequence is DWTDAERAAI…VVSALGRQYH (146 aa). Heme b contacts are provided by His63 and His92.

It belongs to the globin family. As to quaternary structure, heterotetramer of two alpha chains and two beta chains. In terms of tissue distribution, red blood cells.

Its function is as follows. Involved in oxygen transport from gills to the various peripheral tissues. The polypeptide is Hemoglobin subunit beta (hbb) (Leiostomus xanthurus (Spot)).